We begin with the raw amino-acid sequence, 154 residues long: Endoribonuclease YbeY (154 aa).

Residues His114, His118, and His124 each coordinate Zn(2+).

This sequence belongs to the endoribonuclease YbeY family. The cofactor is Zn(2+).

It localises to the cytoplasm. Functionally, single strand-specific metallo-endoribonuclease involved in late-stage 70S ribosome quality control and in maturation of the 3' terminus of the 16S rRNA. The sequence is that of Endoribonuclease YbeY from Anaplasma phagocytophilum (strain HZ).